The following is a 385-amino-acid chain: Exopolygalacturonase rpg16 (385 aa).

An N-terminal signal peptide occupies residues 1–26 (MVRFTSFTSPFSAILLLSFGINKVAT). 4 N-linked (GlcNAc...) asparagine glycosylation sites follow: Asn143, Asn161, Asn164, and Asn180. The PbH1 1 repeat unit spans residues 165-195 (STNLLLHDFIIHTVSNNSNPAKNTDALDLYH). Asp210 (proton donor) is an active-site residue. A disulfide bridge links Cys212 with Cys229. N-linked (GlcNAc...) asparagine glycosylation is found at Asn218 and Asn226. 3 PbH1 repeats span residues 219-241 (VTKV…GSLG), 249-270 (VTQV…RVKT), and 278-299 (VEDI…IITT). His233 is a catalytic residue. N-linked (GlcNAc...) asparagine glycosylation is found at Asn256, Asn282, and Asn343. Cys344 and Cys350 are disulfide-bonded. The PbH1 5 repeat unit spans residues 350 to 376 (CSDVTLTNINISKASNNTKNVCVNLKG). 2 N-linked (GlcNAc...) asparagine glycosylation sites follow: Asn359 and Asn365.

The protein belongs to the glycosyl hydrolase 28 family. N-glycosylated.

It is found in the secreted. It carries out the reaction [(1-&gt;4)-alpha-D-galacturonosyl](n) + H2O = alpha-D-galacturonate + [(1-&gt;4)-alpha-D-galacturonosyl](n-1). Specific in hydrolyzing the terminal glycosidic bond of polygalacturonic acid and oligogalacturonates. The sequence is that of Exopolygalacturonase rpg16 from Rhizopus delemar (strain RA 99-880 / ATCC MYA-4621 / FGSC 9543 / NRRL 43880) (Mucormycosis agent).